The chain runs to 391 residues: Alkanesulfonate monooxygenase (391 aa).

The protein belongs to the SsuD family.

The enzyme catalyses an alkanesulfonate + FMNH2 + O2 = an aldehyde + FMN + sulfite + H2O + 2 H(+). Its function is as follows. Catalyzes the desulfonation of aliphatic sulfonates. This chain is Alkanesulfonate monooxygenase, found in Rhodopseudomonas palustris (strain ATCC BAA-98 / CGA009).